The primary structure comprises 239 residues: uncharacterized protein (239 aa).

8 consecutive transmembrane segments (helical) span residues 4–24 (LIPK…LGMV), 29–49 (VIWH…VYPV), 61–81 (YQKW…ISVF), 84–104 (PPLI…MYFA), 116–136 (VAGV…GMGT), 139–159 (GWAW…SFYV), 180–200 (LLLP…AFIP), and 218–238 (IGIL…LFIT).

This sequence to H.influenzae HI_1626.

Its subcellular location is the cell membrane. This is an uncharacterized protein from Bacillus subtilis (strain 168).